The following is a 215-amino-acid chain: Myelin protein zero-like protein 2 (215 aa).

Residues 1-26 (MYGKSSTRAVLLLLGIQLTALWPIAA) form the signal peptide. The Ig-like V-type domain occupies 27-141 (VEIYTSRVLE…DGVIGEIRLS (115 aa)). At 27 to 154 (VEIYTSRVLE…TVRFSEIHFL (128 aa)) the chain is on the extracellular side. N-linked (GlcNAc...) asparagine glycosylation is found at Asn-39 and Asn-118. The cysteines at positions 47 and 123 are disulfide-linked. Residues 155–175 (ALAIGSACALMIIIVIVVVLF) form a helical membrane-spanning segment. Topologically, residues 176–215 (QHYRKKRWAERAHKVVEIKSKEEERLNQEKKVSVYLEDTD) are cytoplasmic.

Belongs to the myelin P0 protein family. In terms of tissue distribution, widely expressed. In fetal tissues, highest expression in the inner ear. In adult tissues, highest levels in thymus and lung.

It is found in the membrane. In terms of biological role, mediates homophilic cell-cell adhesion. The sequence is that of Myelin protein zero-like protein 2 (MPZL2) from Homo sapiens (Human).